The chain runs to 385 residues: 8-amino-7-oxononanoate synthase (385 aa).

Arginine 23 provides a ligand contact to substrate. Residue 110-111 coordinates pyridoxal 5'-phosphate; it reads GF. Histidine 135 is a substrate binding site. Residues serine 180, histidine 208, and threonine 234 each coordinate pyridoxal 5'-phosphate. Lysine 237 carries the post-translational modification N6-(pyridoxal phosphate)lysine. A substrate-binding site is contributed by threonine 350.

The protein belongs to the class-II pyridoxal-phosphate-dependent aminotransferase family. BioF subfamily. In terms of assembly, homodimer. It depends on pyridoxal 5'-phosphate as a cofactor.

The enzyme catalyses 6-carboxyhexanoyl-[ACP] + L-alanine + H(+) = (8S)-8-amino-7-oxononanoate + holo-[ACP] + CO2. The protein operates within cofactor biosynthesis; biotin biosynthesis. Functionally, catalyzes the decarboxylative condensation of pimeloyl-[acyl-carrier protein] and L-alanine to produce 8-amino-7-oxononanoate (AON), [acyl-carrier protein], and carbon dioxide. This chain is 8-amino-7-oxononanoate synthase, found in Vibrio vulnificus (strain CMCP6).